The sequence spans 244 residues: Small ribosomal subunit protein uS3 (244 aa).

Positions 39–107 (VREMLRKKLA…PAHINVTEVR (69 aa)) constitute a KH type-2 domain. Residues 213-244 (VGQEKQDDSPRNDRNDRGDRGDRPSRPAREAR) form a disordered region. Residues 216–244 (EKQDDSPRNDRNDRGDRGDRPSRPAREAR) are compositionally biased toward basic and acidic residues.

The protein belongs to the universal ribosomal protein uS3 family. In terms of assembly, part of the 30S ribosomal subunit. Forms a tight complex with proteins S10 and S14.

In terms of biological role, binds the lower part of the 30S subunit head. Binds mRNA in the 70S ribosome, positioning it for translation. The chain is Small ribosomal subunit protein uS3 from Xanthomonas oryzae pv. oryzae (strain MAFF 311018).